Consider the following 342-residue polypeptide: GTPase Obg (342 aa).

Positions 1–159 (MQFIDQAQIE…KLLRLELKLL (159 aa)) constitute an Obg domain. The OBG-type G domain occupies 160 to 330 (AEVGIIGLPN…MLQEVWGILD (171 aa)). GTP is bound by residues 166-173 (GLPNAGKS), 191-195 (FTTLI), 213-216 (DIPG), 280-283 (NKID), and 311-313 (SAV). Mg(2+) is bound by residues serine 173 and threonine 193.

Belongs to the TRAFAC class OBG-HflX-like GTPase superfamily. OBG GTPase family. As to quaternary structure, monomer. Mg(2+) is required as a cofactor.

The protein resides in the cytoplasm. Functionally, an essential GTPase which binds GTP, GDP and possibly (p)ppGpp with moderate affinity, with high nucleotide exchange rates and a fairly low GTP hydrolysis rate. Plays a role in control of the cell cycle, stress response, ribosome biogenesis and in those bacteria that undergo differentiation, in morphogenesis control. The polypeptide is GTPase Obg (Trichormus variabilis (strain ATCC 29413 / PCC 7937) (Anabaena variabilis)).